A 266-amino-acid chain; its full sequence is Maltodextrose utilization protein MalA (266 aa).

Has a role in maltotetraose utilization. The polypeptide is Maltodextrose utilization protein MalA (malA) (Streptococcus pneumoniae (strain ATCC BAA-255 / R6)).